Reading from the N-terminus, the 200-residue chain is Large ribosomal subunit protein uL4 (200 aa).

The tract at residues 42–65 (TRAQKTRSEVSGGGAKPWRQKGTG) is disordered.

This sequence belongs to the universal ribosomal protein uL4 family. As to quaternary structure, part of the 50S ribosomal subunit.

Its function is as follows. One of the primary rRNA binding proteins, this protein initially binds near the 5'-end of the 23S rRNA. It is important during the early stages of 50S assembly. It makes multiple contacts with different domains of the 23S rRNA in the assembled 50S subunit and ribosome. In terms of biological role, forms part of the polypeptide exit tunnel. In Vibrio vulnificus (strain CMCP6), this protein is Large ribosomal subunit protein uL4.